A 142-amino-acid chain; its full sequence is Large ribosomal subunit protein uL13 (142 aa).

Belongs to the universal ribosomal protein uL13 family. As to quaternary structure, part of the 50S ribosomal subunit.

In terms of biological role, this protein is one of the early assembly proteins of the 50S ribosomal subunit, although it is not seen to bind rRNA by itself. It is important during the early stages of 50S assembly. The protein is Large ribosomal subunit protein uL13 of Edwardsiella ictaluri (strain 93-146).